The sequence spans 291 residues: tRNA dimethylallyltransferase (291 aa).

11–18 (GPTASGKS) contacts ATP. 13–18 (TASGKS) is a substrate binding site. The interval 42-45 (DSMQ) is interaction with substrate tRNA.

It belongs to the IPP transferase family. Monomer. Mg(2+) is required as a cofactor.

The catalysed reaction is adenosine(37) in tRNA + dimethylallyl diphosphate = N(6)-dimethylallyladenosine(37) in tRNA + diphosphate. Catalyzes the transfer of a dimethylallyl group onto the adenine at position 37 in tRNAs that read codons beginning with uridine, leading to the formation of N6-(dimethylallyl)adenosine (i(6)A). This is tRNA dimethylallyltransferase from Rubrobacter xylanophilus (strain DSM 9941 / JCM 11954 / NBRC 16129 / PRD-1).